A 72-amino-acid chain; its full sequence is NAD(P)H-quinone oxidoreductase subunit O (72 aa).

The protein belongs to the complex I NdhO subunit family. As to quaternary structure, NDH-1 can be composed of about 15 different subunits; different subcomplexes with different compositions have been identified which probably have different functions.

It is found in the cellular thylakoid membrane. It carries out the reaction a plastoquinone + NADH + (n+1) H(+)(in) = a plastoquinol + NAD(+) + n H(+)(out). The enzyme catalyses a plastoquinone + NADPH + (n+1) H(+)(in) = a plastoquinol + NADP(+) + n H(+)(out). Functionally, NDH-1 shuttles electrons from an unknown electron donor, via FMN and iron-sulfur (Fe-S) centers, to quinones in the respiratory and/or the photosynthetic chain. The immediate electron acceptor for the enzyme in this species is believed to be plastoquinone. Couples the redox reaction to proton translocation, and thus conserves the redox energy in a proton gradient. Cyanobacterial NDH-1 also plays a role in inorganic carbon-concentration. This chain is NAD(P)H-quinone oxidoreductase subunit O, found in Gloeothece citriformis (strain PCC 7424) (Cyanothece sp. (strain PCC 7424)).